A 313-amino-acid chain; its full sequence is ADP-L-glycero-D-manno-heptose-6-epimerase (313 aa).

NADP(+) is bound by residues 10–11, 31–32, Arg38, Lys53, 75–79, and Asn92; these read FI, DD, and EGACS. Tyr139 acts as the Proton acceptor in catalysis. Residue Lys143 coordinates NADP(+). Asn168 is a binding site for substrate. Val169 and Lys177 together coordinate NADP(+). Catalysis depends on Lys177, which acts as the Proton acceptor. Residues Lys179, His186, 200–203, Arg213, and Tyr277 contribute to the substrate site; that span reads FEGW.

The protein belongs to the NAD(P)-dependent epimerase/dehydratase family. HldD subfamily. As to quaternary structure, homopentamer. The cofactor is NADP(+).

It catalyses the reaction ADP-D-glycero-beta-D-manno-heptose = ADP-L-glycero-beta-D-manno-heptose. Its pathway is nucleotide-sugar biosynthesis; ADP-L-glycero-beta-D-manno-heptose biosynthesis; ADP-L-glycero-beta-D-manno-heptose from D-glycero-beta-D-manno-heptose 7-phosphate: step 4/4. In terms of biological role, catalyzes the interconversion between ADP-D-glycero-beta-D-manno-heptose and ADP-L-glycero-beta-D-manno-heptose via an epimerization at carbon 6 of the heptose. This is ADP-L-glycero-D-manno-heptose-6-epimerase from Marinobacter nauticus (strain ATCC 700491 / DSM 11845 / VT8) (Marinobacter aquaeolei).